The primary structure comprises 55 residues: MVVDRKEEKKVAVTLRLTTEENEILNRIKEKYNISKSDATGILIKKYAKEEYGAF.

It belongs to the transcriptional regulatory CopG/NikR family.

Acts in trans as a negative regulatory element in pE194 replication. The protein is Cop-6 protein of Staphylococcus aureus.